The following is a 378-amino-acid chain: Chaperone protein DnaJ (378 aa).

In terms of domain architecture, J spans 5 to 70 (DFYEILGVSK…EKRSAYDRMG (66 aa)). A CR-type zinc finger spans residues 137–215 (GCKKEISFTA…CHGNGVKDKS (79 aa)). Cysteine 150, cysteine 153, cysteine 167, cysteine 170, cysteine 189, cysteine 192, cysteine 203, and cysteine 206 together coordinate Zn(2+). 4 CXXCXGXG motif repeats span residues 150-157 (CDTCDGKG), 167-174 (CQTCHGQG), 189-196 (CPHCGGTG), and 203-210 (CSDCHGNG).

It belongs to the DnaJ family. Homodimer. Zn(2+) serves as cofactor.

The protein localises to the cytoplasm. Its function is as follows. Participates actively in the response to hyperosmotic and heat shock by preventing the aggregation of stress-denatured proteins and by disaggregating proteins, also in an autonomous, DnaK-independent fashion. Unfolded proteins bind initially to DnaJ; upon interaction with the DnaJ-bound protein, DnaK hydrolyzes its bound ATP, resulting in the formation of a stable complex. GrpE releases ADP from DnaK; ATP binding to DnaK triggers the release of the substrate protein, thus completing the reaction cycle. Several rounds of ATP-dependent interactions between DnaJ, DnaK and GrpE are required for fully efficient folding. Also involved, together with DnaK and GrpE, in the DNA replication of plasmids through activation of initiation proteins. This chain is Chaperone protein DnaJ, found in Psychrobacter cryohalolentis (strain ATCC BAA-1226 / DSM 17306 / VKM B-2378 / K5).